The primary structure comprises 401 residues: DNA replication and repair protein RecF (401 aa).

30–37 contributes to the ATP binding site; that stretch reads GYNGIGKT.

Belongs to the RecF family.

It localises to the cytoplasm. In terms of biological role, the RecF protein is involved in DNA metabolism; it is required for DNA replication and normal SOS inducibility. RecF binds preferentially to single-stranded, linear DNA. It also seems to bind ATP. The chain is DNA replication and repair protein RecF from Arthrobacter sp. (strain FB24).